Consider the following 1203-residue polypeptide: DNA-directed RNA polymerase subunit beta' (1203 aa).

Residues Cys60, Cys62, Cys75, and Cys78 each coordinate Zn(2+). Mg(2+)-binding residues include Asp449, Asp451, and Asp453. Zn(2+)-binding residues include Cys818, Cys892, Cys899, and Cys902.

It belongs to the RNA polymerase beta' chain family. As to quaternary structure, the RNAP catalytic core consists of 2 alpha, 1 beta, 1 beta' and 1 omega subunit. When a sigma factor is associated with the core the holoenzyme is formed, which can initiate transcription. Mg(2+) serves as cofactor. Zn(2+) is required as a cofactor.

It catalyses the reaction RNA(n) + a ribonucleoside 5'-triphosphate = RNA(n+1) + diphosphate. Functionally, DNA-dependent RNA polymerase catalyzes the transcription of DNA into RNA using the four ribonucleoside triphosphates as substrates. In Bacillus mycoides (strain KBAB4) (Bacillus weihenstephanensis), this protein is DNA-directed RNA polymerase subunit beta'.